The sequence spans 201 residues: Glycolipid transfer protein (201 aa).

The glycolipid transfer protein homology domain stretch occupies residues I28–D168.

In terms of biological role, cargo transport protein that plays a key role in transport and secretion of liamocins, glycolipids (also called heavy oils) composed of a single mannitol or arabitol headgroup linked to either three, four or even six 3,5-dihydroxydecanoic ester tail-groups. The protein is Glycolipid transfer protein of Aureobasidium melanogenum (Aureobasidium pullulans var. melanogenum).